The following is a 293-amino-acid chain: ATP synthase gamma chain (293 aa).

The protein belongs to the ATPase gamma chain family. As to quaternary structure, F-type ATPases have 2 components, CF(1) - the catalytic core - and CF(0) - the membrane proton channel. CF(1) has five subunits: alpha(3), beta(3), gamma(1), delta(1), epsilon(1). CF(0) has three main subunits: a, b and c.

The protein localises to the cell membrane. Functionally, produces ATP from ADP in the presence of a proton gradient across the membrane. The gamma chain is believed to be important in regulating ATPase activity and the flow of protons through the CF(0) complex. This chain is ATP synthase gamma chain, found in Methylacidiphilum infernorum (isolate V4) (Methylokorus infernorum (strain V4)).